The sequence spans 134 residues: Acyl carrier protein SF2, chloroplastic (134 aa).

The transit peptide at 1-51 (MSTTFCSSVSMQATSLAATTRISFQKPALVSTTNLSFNLRRSIPTRFSISC) directs the protein to the chloroplast. Residues 55–130 (PETVEKVSKI…EAAELIEELV (76 aa)) enclose the Carrier domain. Position 90 is an O-(pantetheine 4'-phosphoryl)serine (serine 90).

This sequence belongs to the acyl carrier protein (ACP) family. Post-translationally, 4'-phosphopantetheine is transferred from CoA to a specific serine of apo-ACP by acpS. This modification is essential for activity because fatty acids are bound in thioester linkage to the sulfhydryl of the prosthetic group.

Its subcellular location is the plastid. It is found in the chloroplast. The protein operates within lipid metabolism; fatty acid biosynthesis. In terms of biological role, carrier of the growing fatty acid chain in fatty acid biosynthesis. This Brassica campestris (Field mustard) protein is Acyl carrier protein SF2, chloroplastic (Acl1.1).